The primary structure comprises 83 residues: uncharacterized protein (83 aa).

3 helical membrane-spanning segments follow: residues 4-24 (AILS…GVLM), 32-52 (IGNI…LKAF), and 54-74 (YYDL…IIIG).

Its subcellular location is the cell membrane. This is an uncharacterized protein from Methanocaldococcus jannaschii (strain ATCC 43067 / DSM 2661 / JAL-1 / JCM 10045 / NBRC 100440) (Methanococcus jannaschii).